A 469-amino-acid polypeptide reads, in one-letter code: 6-phospho-beta-galactosidase (469 aa).

Residues Q19, H116, N159, E160, and N297 each coordinate D-galactose 6-phosphate. The active-site Proton donor is E160. Residue E375 is the Nucleophile of the active site. Residues S428, W429, K435, and Y437 each coordinate D-galactose 6-phosphate.

This sequence belongs to the glycosyl hydrolase 1 family.

It carries out the reaction a 6-phospho-beta-D-galactoside + H2O = D-galactose 6-phosphate + an alcohol. Its pathway is carbohydrate metabolism; lactose degradation; D-galactose 6-phosphate and beta-D-glucose from lactose 6-phosphate: step 1/1. This is 6-phospho-beta-galactosidase from Streptococcus equi subsp. zooepidemicus (strain H70).